The primary structure comprises 240 residues: Lectin (240 aa).

The Mn(2+) site is built by Glu-127 and Asp-129. Ca(2+)-binding residues include Asp-129, Tyr-131, Asn-133, and Asp-138. Asp-138 and His-143 together coordinate Mn(2+).

The protein belongs to the leguminous lectin family. In terms of assembly, heterotetramer of two alpha and two beta chains; disulfide bond linked.

Its function is as follows. Binds preferentially to oligosaccharides bearing the sequence Man-alpha-1-&gt;2 Man-alpha-1-&gt;6 Man-alpha-1-&gt;6Man found in early steps of glycoprotein processing in the endoplasmic reticulum. It binds weakly to highly processed oligosaccharide structures. The sequence is that of Lectin from Leucomphalos mildbraedii (Bowringia mildbraedii).